Here is a 256-residue protein sequence, read N- to C-terminus: tRNA (guanine-N(7)-)-methyltransferase (256 aa).

The span at 1-15 (MVATGGQAQDQSHNQ) shows a compositional bias: polar residues. Residues 1 to 22 (MVATGGQAQDQSHNQEPGVLCP) are disordered. Residues Gly-79, 102 to 103 (EI), 137 to 138 (NA), and Leu-157 contribute to the S-adenosyl-L-methionine site. Asp-160 is a catalytic residue. 235 to 237 (SEE) serves as a coordination point for S-adenosyl-L-methionine.

Belongs to the class I-like SAM-binding methyltransferase superfamily. TrmB family.

Its subcellular location is the nucleus. The catalysed reaction is guanosine(46) in tRNA + S-adenosyl-L-methionine = N(7)-methylguanosine(46) in tRNA + S-adenosyl-L-homocysteine. Its pathway is tRNA modification; N(7)-methylguanine-tRNA biosynthesis. In terms of biological role, catalyzes the formation of N(7)-methylguanine at position 46 (m7G46) in tRNA. The chain is tRNA (guanine-N(7)-)-methyltransferase from Drosophila yakuba (Fruit fly).